A 610-amino-acid chain; its full sequence is MPSALAFVLLVLNISLLKGQSPPGKPEIHKCRSPDKETFTCWWNPGTDGGLPTNYSLTYSKEGEKTTYECPDYKTSGPNSCFFSKQYTSIWKIYIITVNATNQMGSSSSDPLYVDVTYIVEPEPPRNLTLEVKQLKDKKTYLWVKWSPPTITDVKTGWFTMEYEIRLKPEEAEEWEIHFTGHQTQFKVFDLYPGQKYLVQTRCKPDHGYWSRWSQESSVEMPNDFTLKDTTVWIIVAILSAVICLIMVWAVALKGYSMMTCIFPPVPGPKIKGFDTHLLEKGKSEELLSALGCQDFPPTSDCEDLLVEFLEVDDNEDERLMPSHSKEYPGQGVKPTHLDPDSDSGHGSYDSHSLLSEKCEEPQAYPPTLHIPEITEKPENPEANIPPTVDPQSTNPNFHVDAPKSSTWPLLPGQHMPRSPYHSVADVCKLAGSPVNTLDSFLDKAEENVLKLSKALETGEEEVAEQKGAKSFPSDKQNTPWPLLQEKSPTVYVKPPDYVEIHKVNKDGVLSLFPKQRENNQTEKPGVPETSKEYAKVSGITDNNILVLVPDSRAQNTALLEESAKKAPPSFEADQSEKDLASFTATSSNRRLQLGRLDYLDPTCFMHSFH.

Residues 1 to 19 (MPSALAFVLLVLNISLLKG) form the signal peptide. At 20–229 (QSPPGKPEIH…EMPNDFTLKD (210 aa)) the chain is on the extracellular side. Fibronectin type-III domains follow at residues 22–122 (PPGK…IVEP) and 124–224 (PPRN…MPND). A disulfide bridge links C31 with C41. N-linked (GlcNAc...) asparagine glycosylation is present at N54. C70 and C81 are oxidised to a cystine. N99 and N127 each carry an N-linked (GlcNAc...) asparagine glycan. The Zn(2+) site is built by D206 and H207. A WSXWS motif motif is present at residues 210 to 214 (WSRWS). Residues 230-253 (TTVWIIVAILSAVICLIMVWAVAL) traverse the membrane as a helical segment. Residues 254 to 610 (KGYSMMTCIF…DPTCFMHSFH (357 aa)) are Cytoplasmic-facing. Positions 262–270 (IFPPVPGPK) match the Box 1 motif motif. Disordered stretches follow at residues 317–355 (DERLMPSHSKEYPGQGVKPTHLDPDSDSGHGSYDSHSLL), 458–482 (TGEEEVAEQKGAKSFPSDKQNTPWP), and 564–584 (AKKAPPSFEADQSEKDLASFT). Residues 318–327 (ERLMPSHSKE) are compositionally biased toward basic and acidic residues. Residues 345 to 354 (GHGSYDSHSL) show a composition bias toward low complexity.

Belongs to the type I cytokine receptor family. Type 1 subfamily. Interacts with SMARCA1. Interacts with NEK3 and VAV2 and this interaction is prolactin-dependent.

The protein resides in the membrane. Functionally, this is a receptor for the anterior pituitary hormone prolactin. This is Prolactin receptor (Prlr) from Rattus norvegicus (Rat).